Reading from the N-terminus, the 216-residue chain is LexA repressor (216 aa).

Positions 29–49 form a DNA-binding region, H-T-H motif; that stretch reads RAEIAQALGFRSPNAAEDHLK. Residues S134 and K171 each act as for autocatalytic cleavage activity in the active site.

It belongs to the peptidase S24 family. Homodimer.

The enzyme catalyses Hydrolysis of Ala-|-Gly bond in repressor LexA.. Its function is as follows. Represses a number of genes involved in the response to DNA damage (SOS response), including recA and lexA. In the presence of single-stranded DNA, RecA interacts with LexA causing an autocatalytic cleavage which disrupts the DNA-binding part of LexA, leading to derepression of the SOS regulon and eventually DNA repair. This chain is LexA repressor, found in Bordetella bronchiseptica (strain ATCC BAA-588 / NCTC 13252 / RB50) (Alcaligenes bronchisepticus).